The sequence spans 65 residues: Large ribosomal subunit protein uL30 (65 aa).

It belongs to the universal ribosomal protein uL30 family. As to quaternary structure, part of the 50S ribosomal subunit.

This is Large ribosomal subunit protein uL30 from Aster yellows witches'-broom phytoplasma (strain AYWB).